The chain runs to 1049 residues: RIMS-binding protein 2 (1049 aa).

Residues 164 to 231 (GKVHLCVARY…PSNFVDFIQD (68 aa)) form the SH3 1 domain. Fibronectin type-III domains lie at 294-387 (VPYP…GKDV), 390-471 (APSQ…EKDE), and 486-587 (PPQD…VPPA). Disordered stretches follow at residues 580-664 (PDLL…VSTT), 694-714 (SAGP…EVKR), and 728-750 (LGQQ…GSDL). Positions 582 to 598 (LLVPPAPHPRTAPPPKP) are enriched in pro residues. Residues 603 to 616 (MDTKDLGPHVKVDE) are compositionally biased toward basic and acidic residues. Residues 641–651 (GPGRRSPSPSR) are compositionally biased toward low complexity. 2 positions are modified to phosphoserine: Ser-701 and Ser-709. A compositionally biased stretch (basic and acidic residues) spans 735–746 (CHGDEYHTESSR). 2 positions are modified to phosphoserine: Ser-832 and Ser-839. Thr-841 bears the Phosphothreonine mark. SH3 domains follow at residues 848–916 (LPAR…EIHA) and 952–1019 (VPTR…EVPD). A disordered region spans residues 1024–1049 (HLSDAPPHYSHDPPMRTKAKRVSQPP). A compositionally biased stretch (basic residues) spans 1040–1049 (TKAKRVSQPP).

The protein belongs to the RIMBP family. As to quaternary structure, interacts with CACNA1D and CACNA1B, and potentially with other Ca(2+) channel alpha-1 isoforms. Interacts with RIMS1 and RIMS2.

It localises to the cell membrane. Its subcellular location is the synapse. Plays a role in the synaptic transmission as bifunctional linker that interacts simultaneously with RIMS1, RIMS2, CACNA1D and CACNA1B. This is RIMS-binding protein 2 (Rimbp2) from Rattus norvegicus (Rat).